Consider the following 375-residue polypeptide: DnaJ homolog subfamily B member 12 (375 aa).

The residue at position 1 (Met1) is an N-acetylmethionine. The Cytoplasmic segment spans residues 1 to 243 (MESNKDEAER…DRRDNQGDGG (243 aa)). The disordered stretch occupies residues 45–92 (ALIESLNQKPQTAGDQPPPTDTTHATHRKAGGTDAPSANGEAGGESTK). The span at 49–58 (SLNQKPQTAG) shows a compositional bias: polar residues. Positions 112–176 (YEILGVSRGA…RKQYDQFGDD (65 aa)) constitute a J domain. At His185 the chain carries Pros-methylhistidine. Residues 244-264 (LGVFVQLMPILILILVSALSQ) form a helical membrane-spanning segment. Over 265–375 (LMVSSPPYSL…LSEVQASLHG (111 aa)) the chain is Lumenal.

This sequence belongs to the DnaJ family. DNAJB12/DNAJB14 subfamily. In terms of assembly, homodimer and homotetramer. Interacts (via J domain) with HSPA8/Hsc70. Forms a multiprotein complex, at least composed of DNAJB12, DNAJB14, HSPA8/Hsc70 and SGTA; interaction with DNAJB14 and HSPA8/Hsc70 is direct. Methylated at His-185 by METTL9.

The protein localises to the endoplasmic reticulum membrane. The protein resides in the nucleus membrane. Its function is as follows. Acts as a co-chaperone with HSPA8/Hsc70; required to promote protein folding and trafficking, prevent aggregation of client proteins, and promote unfolded proteins to endoplasmic reticulum-associated degradation (ERAD) pathway. Acts by determining HSPA8/Hsc70's ATPase and polypeptide-binding activities. Can also act independently of HSPA8/Hsc70: together with DNAJB14, acts as a chaperone that promotes maturation of potassium channels KCND2 and KCNH2 by stabilizing nascent channel subunits and assembling them into tetramers. While stabilization of nascent channel proteins is dependent on HSPA8/Hsc70, the process of oligomerization of channel subunits is independent of HSPA8/Hsc70. When overexpressed, forms membranous structures together with DNAJB14 and HSPA8/Hsc70 within the nucleus; the role of these structures, named DJANGOs, is still unclear. Functionally, (Microbial infection) In case of infection by polyomavirus, involved in the virus endoplasmic reticulum membrane penetration and infection. In Homo sapiens (Human), this protein is DnaJ homolog subfamily B member 12.